The following is a 138-amino-acid chain: Transcription antitermination protein NusB (138 aa).

The protein belongs to the NusB family.

Involved in transcription antitermination. Required for transcription of ribosomal RNA (rRNA) genes. Binds specifically to the boxA antiterminator sequence of the ribosomal RNA (rrn) operons. The sequence is that of Transcription antitermination protein NusB from Yersinia pseudotuberculosis serotype O:1b (strain IP 31758).